The chain runs to 166 residues: NADPH-dependent 7-cyano-7-deazaguanine reductase (166 aa).

C57 acts as the Thioimide intermediate in catalysis. D64 functions as the Proton donor in the catalytic mechanism. Substrate contacts are provided by residues 79-81 (VES) and 98-99 (HE).

The protein belongs to the GTP cyclohydrolase I family. QueF type 1 subfamily.

Its subcellular location is the cytoplasm. It catalyses the reaction 7-aminomethyl-7-carbaguanine + 2 NADP(+) = 7-cyano-7-deazaguanine + 2 NADPH + 3 H(+). The protein operates within tRNA modification; tRNA-queuosine biosynthesis. Its function is as follows. Catalyzes the NADPH-dependent reduction of 7-cyano-7-deazaguanine (preQ0) to 7-aminomethyl-7-deazaguanine (preQ1). The protein is NADPH-dependent 7-cyano-7-deazaguanine reductase of Staphylococcus aureus (strain MRSA252).